Here is a 219-residue protein sequence, read N- to C-terminus: Proteasome subunit beta type-9 (219 aa).

Residues 1-20 (MLRTGAPNGDLPRAGEVHTG) constitute a propeptide, removed in mature form. Thr-21 (nucleophile) is an active-site residue. An N6-acetyllysine mark is found at Lys-53 and Lys-109.

The protein belongs to the peptidase T1B family. As to quaternary structure, the 26S proteasome consists of a 20S proteasome core and two 19S regulatory subunits. The 20S proteasome core is composed of 28 subunits that are arranged in four stacked rings, resulting in a barrel-shaped structure. The two end rings are each formed by seven alpha subunits, and the two central rings are each formed by seven beta subunits. The catalytic chamber with the active sites is on the inside of the barrel. Component of the immunoproteasome, where it displaces the equivalent housekeeping subunit PSMB6. Component of the spermatoproteasome, a form of the proteasome specifically found in testis. Autocleaved. The resulting N-terminal Thr residue of the mature subunit is responsible for the nucleophile proteolytic activity.

It localises to the cytoplasm. It is found in the nucleus. The catalysed reaction is Cleavage of peptide bonds with very broad specificity.. In terms of biological role, the proteasome is a multicatalytic proteinase complex which is characterized by its ability to cleave peptides with Arg, Phe, Tyr, Leu, and Glu adjacent to the leaving group at neutral or slightly basic pH. The proteasome has an ATP-dependent proteolytic activity. This subunit is involved in antigen processing to generate class I binding peptides. This is Proteasome subunit beta type-9 (PSMB9) from Bos taurus (Bovine).